Consider the following 465-residue polypeptide: Lactaldehyde dehydrogenase (465 aa).

An NAD(+)-binding site is contributed by 220-225; sequence GSVEVG. Residues glutamate 240 and cysteine 274 contribute to the active site.

This sequence belongs to the aldehyde dehydrogenase family. In terms of assembly, homotetramer.

It catalyses the reaction (S)-lactaldehyde + NAD(+) + H2O = (S)-lactate + NADH + 2 H(+). It participates in cofactor biosynthesis; coenzyme F420 biosynthesis. In terms of biological role, involved in F420 biosynthesis through the oxidation of lactaldehyde to lactate. The protein is Lactaldehyde dehydrogenase of Methanococcus maripaludis (strain C5 / ATCC BAA-1333).